A 371-amino-acid chain; its full sequence is Neutral protease 2 homolog MGYG_03465 (371 aa).

Positions 1-19 (MQFVAVLAALGALVAPAAA) are cleaved as a signal peptide. Positions 20-188 (YPHAPMNETL…SIHARALEKR (169 aa)) are excised as a propeptide. Intrachain disulfides connect Cys196/Cys267 and Cys274/Cys292. His316 contacts Zn(2+). The active site involves Glu317. Zn(2+) contacts are provided by His320 and Asp331.

Belongs to the peptidase M35 family. Requires Zn(2+) as cofactor.

The protein localises to the secreted. The enzyme catalyses Preferential cleavage of bonds with hydrophobic residues in P1'. Also 3-Asn-|-Gln-4 and 8-Gly-|-Ser-9 bonds in insulin B chain.. Functionally, secreted metalloproteinase that allows assimilation of proteinaceous substrates. Shows high activities on basic nuclear substrates such as histone and protamine. May be involved in virulence. This is Neutral protease 2 homolog MGYG_03465 from Arthroderma gypseum (strain ATCC MYA-4604 / CBS 118893) (Microsporum gypseum).